Reading from the N-terminus, the 204-residue chain is Thymidylate kinase (204 aa).

11–18 (GLDKSGKT) lines the ATP pocket.

The protein belongs to the thymidylate kinase family.

The catalysed reaction is dTMP + ATP = dTDP + ADP. The protein operates within pyrimidine metabolism; dTTP biosynthesis. This chain is Thymidylate kinase (TMK), found in Bos taurus (Bovine).